Reading from the N-terminus, the 607-residue chain is Bifunctional endo-1,4-beta-xylanase A (607 aa).

Residues 1-18 (MRTIKFFFAVAIATVAKA) form the signal peptide. The region spanning 35–242 (NGQTQHKGVA…SSGIADVTKL (208 aa)) is the GH11 1 domain. The Nucleophile role is filled by E141. Residue E223 is the Proton donor of the active site. Positions 248 to 272 (QKGSNPAPTSTGTVPSSSAGGSTAN) are enriched in polar residues. The disordered stretch occupies residues 248-284 (QKGSNPAPTSTGTVPSSSAGGSTANGKKFTVGNGQNQ). In terms of domain architecture, GH11 2 spans 280-487 (NGQNQHKGVN…SSGVADVTLL (208 aa)). The Nucleophile role is filled by E386. The Proton donor role is filled by E474. Positions 493-514 (PKGSSPATSAAPRTTTRTTTRT) are disordered. Over residues 496–514 (SSPATSAAPRTTTRTTTRT) the composition is skewed to low complexity. 2 CBM10 domains span residues 523–563 (KCSA…CGCG) and 566–606 (QCSS…CGCG).

The protein belongs to the glycosyl hydrolase 11 (cellulase G) family.

It carries out the reaction Endohydrolysis of (1-&gt;4)-beta-D-xylosidic linkages in xylans.. It functions in the pathway glycan degradation; xylan degradation. Its function is as follows. Hydrolyzes xylans into xylobiose and xylose. This is Bifunctional endo-1,4-beta-xylanase A (XYNA) from Neocallimastix patriciarum (Rumen fungus).